The primary structure comprises 249 residues: uncharacterized protein (249 aa).

Residues Met1–Ala43 form the signal peptide. Residues Ala40–Val59 are disordered. The NodB homology domain maps to Pro68–Gly243.

This is an uncharacterized protein from Streptomyces coelicolor (strain ATCC BAA-471 / A3(2) / M145).